Here is a 186-residue protein sequence, read N- to C-terminus: PRA1 family protein G2 (186 aa).

4 helical membrane passes run 66–86 (YFFVNYTIIVSTCAAFALITA), 87–107 (SPVALIVVGAIIALWLIFHFF), 119–139 (VGDRTVLLFLVLASVWAIWFT), and 142–162 (AVNLAVGVSVGLLLCIIHAVF).

Belongs to the PRA1 family. In terms of tissue distribution, expressed in roots and trichomes.

The protein resides in the endoplasmic reticulum membrane. May be involved in both secretory and endocytic intracellular trafficking in the endosomal/prevacuolar compartments. The polypeptide is PRA1 family protein G2 (PRA1G2) (Arabidopsis thaliana (Mouse-ear cress)).